Reading from the N-terminus, the 382-residue chain is WD repeat-containing protein 55 (382 aa).

Over residues 1-11 (MDRMCEERAAE) the composition is skewed to basic and acidic residues. Positions 1–31 (MDRMCEERAAEDGSDEEDPDATEAPARIRDT) are disordered. The segment covering 12–21 (DGSDEEDPDA) has biased composition (acidic residues). A Phosphoserine modification is found at Ser-14. 7 WD repeats span residues 36–75 (VLEAPASGLAFHPARDLLAAGDVDGDVFVFSYSCQEGETK), 82–121 (HHLKSCRAVVFSEDGQKLVTVSKDKAIHFLDVELGRLERR), 125–163 (AHGAPINSLLLVDENVLATGDDTGGIRLWDQRKEGPLMD), 166–205 (QHEEYIADMALDPDKKLLLTASGDGCLGVFNIKRRRFELL), 208–247 (PQSGDLTSVTLMKYGRKVACGSSEGTIYLFNWDGFGATSD), 250–289 (ALRAESIDCMVPVTESLLCAGSTDGVIRAVNILPNRVVGS), and 293–332 (HAEEPVENLALSHCGCFLASSGHDQRLKFWDMAQLRALVV). 2 positions are modified to phosphoserine: Ser-354 and Ser-381.

The protein belongs to the WD repeat WDR55 family.

It is found in the nucleus. It localises to the nucleolus. Its subcellular location is the cytoplasm. In terms of biological role, nucleolar protein that acts as a modulator of rRNA synthesis. Plays a central role during organogenesis. The polypeptide is WD repeat-containing protein 55 (WDR55) (Bos taurus (Bovine)).